A 213-amino-acid polypeptide reads, in one-letter code: A-type ATP synthase subunit D (213 aa).

This sequence belongs to the V-ATPase D subunit family. As to quaternary structure, has multiple subunits with at least A(3), B(3), C, D, E, F, H, I and proteolipid K(x).

It is found in the cell membrane. Its function is as follows. Component of the A-type ATP synthase that produces ATP from ADP in the presence of a proton gradient across the membrane. The chain is A-type ATP synthase subunit D from Saccharolobus islandicus (strain Y.N.15.51 / Yellowstone #2) (Sulfolobus islandicus).